The sequence spans 163 residues: Phosphopantetheine adenylyltransferase (163 aa).

S9 is a binding site for substrate. Residues 9 to 10 and H17 contribute to the ATP site; that span reads SF. The substrate site is built by K41, V78, and R92. Residues 93 to 95, E103, and 128 to 134 each bind ATP; these read GLR and SRPITAT.

The protein belongs to the bacterial CoaD family. As to quaternary structure, homohexamer. Mg(2+) is required as a cofactor.

The protein localises to the cytoplasm. It catalyses the reaction (R)-4'-phosphopantetheine + ATP + H(+) = 3'-dephospho-CoA + diphosphate. It functions in the pathway cofactor biosynthesis; coenzyme A biosynthesis; CoA from (R)-pantothenate: step 4/5. Functionally, reversibly transfers an adenylyl group from ATP to 4'-phosphopantetheine, yielding dephospho-CoA (dPCoA) and pyrophosphate. The chain is Phosphopantetheine adenylyltransferase from Rhizobium meliloti (strain 1021) (Ensifer meliloti).